A 309-amino-acid chain; its full sequence is Carboxylesterase Culp6 homolog (309 aa).

Residues 5–25 (ITVIAVLIVLALIGVGIVQYV) traverse the membrane as a helical segment. A disulfide bond links Cys55 and Cys146. Residues Ser157, Asp253, and His279 contribute to the active site. A disulfide bridge connects residues Cys249 and Cys256.

It belongs to the cutinase family.

The protein resides in the cell membrane. It carries out the reaction a butanoate ester + H2O = an aliphatic alcohol + butanoate + H(+). With respect to regulation, inhibited by tetrahydrolipstatin (THL), a specific lipase inhibitor. Functionally, esterase that may be involved in cell wall biosynthesis and/or maintenance. Hydrolyzes pNP-butyrate (C4). The polypeptide is Carboxylesterase Culp6 homolog (Corynebacterium glutamicum (strain ATCC 13032 / DSM 20300 / JCM 1318 / BCRC 11384 / CCUG 27702 / LMG 3730 / NBRC 12168 / NCIMB 10025 / NRRL B-2784 / 534)).